The following is a 333-amino-acid chain: Ribosomal RNA small subunit methyltransferase H (333 aa).

S-adenosyl-L-methionine-binding positions include 34 to 36, aspartate 59, phenylalanine 86, aspartate 112, and glutamine 119; that span reads GGH.

Belongs to the methyltransferase superfamily. RsmH family.

It localises to the cytoplasm. The enzyme catalyses cytidine(1402) in 16S rRNA + S-adenosyl-L-methionine = N(4)-methylcytidine(1402) in 16S rRNA + S-adenosyl-L-homocysteine + H(+). Its function is as follows. Specifically methylates the N4 position of cytidine in position 1402 (C1402) of 16S rRNA. The sequence is that of Ribosomal RNA small subunit methyltransferase H from Prosthecochloris aestuarii (strain DSM 271 / SK 413).